The primary structure comprises 140 residues: Ribosome-binding factor A (140 aa).

Positions 121 to 140 (KTEQTSADDDADRLDSEDRS) are disordered.

This sequence belongs to the RbfA family. In terms of assembly, monomer. Binds 30S ribosomal subunits, but not 50S ribosomal subunits or 70S ribosomes.

Its subcellular location is the cytoplasm. Functionally, one of several proteins that assist in the late maturation steps of the functional core of the 30S ribosomal subunit. Associates with free 30S ribosomal subunits (but not with 30S subunits that are part of 70S ribosomes or polysomes). Required for efficient processing of 16S rRNA. May interact with the 5'-terminal helix region of 16S rRNA. This chain is Ribosome-binding factor A, found in Psychrobacter sp. (strain PRwf-1).